A 225-amino-acid chain; its full sequence is Uracil-DNA glycosylase (225 aa).

The active-site Proton acceptor is the aspartate 67.

The protein belongs to the uracil-DNA glycosylase (UDG) superfamily. UNG family.

Its subcellular location is the cytoplasm. It catalyses the reaction Hydrolyzes single-stranded DNA or mismatched double-stranded DNA and polynucleotides, releasing free uracil.. Excises uracil residues from the DNA which can arise as a result of misincorporation of dUMP residues by DNA polymerase or due to deamination of cytosine. This is Uracil-DNA glycosylase from Coxiella burnetii (strain Dugway 5J108-111).